Here is a 231-residue protein sequence, read N- to C-terminus: 7-cyano-7-deazaguanine synthase (231 aa).

8 to 18 (FSGGQDSTTCL) contributes to the ATP binding site. Positions 188, 197, 200, and 203 each coordinate Zn(2+).

The protein belongs to the QueC family. The cofactor is Zn(2+).

The catalysed reaction is 7-carboxy-7-deazaguanine + NH4(+) + ATP = 7-cyano-7-deazaguanine + ADP + phosphate + H2O + H(+). It participates in purine metabolism; 7-cyano-7-deazaguanine biosynthesis. Catalyzes the ATP-dependent conversion of 7-carboxy-7-deazaguanine (CDG) to 7-cyano-7-deazaguanine (preQ(0)). The protein is 7-cyano-7-deazaguanine synthase of Salmonella agona (strain SL483).